The sequence spans 172 residues: Centrin-2 (172 aa).

The disordered stretch occupies residues 1 to 30 (MASNFKKANMASSSQRKRMSPKPELTEEQK). A2 is modified (N-acetylalanine). The interval 2-25 (ASNFKKANMASSSQRKRMSPKPEL) is required for self-assembly. Residue S20 is modified to Phosphoserine. A Glycyl lysine isopeptide (Lys-Gly) (interchain with G-Cter in SUMO2) cross-link involves residue K22. Position 26 is a phosphothreonine (T26). EF-hand domains lie at 28–63 (EQKQ…LGFE), 64–99 (PKKE…KMSE), 101–136 (DTKE…LGEN), and 137–172 (LTDE…TSLY). Ca(2+) is bound by residues D41, D43, T45, T47, and E52. Ca(2+) contacts are provided by D150, D152, D154, E156, and E161.

The protein belongs to the centrin family. As to quaternary structure, monomer. Homooligomer. Interacts with SFI1. Interacts with CCP110. Component of the XPC complex composed of XPC, RAD23B and CETN2. Component of the nuclear pore complex (NPC)-associated TREX-2 complex (transcription and export complex 2), composed of at least GANP, 2 copies of ENY2, PCID2, SEM1/DSS1, and either centrin CETN2 or centrin CETN3. The TREX-2 complex also associates with ALYREF/ALY and with the nucleoporin NUP153. Interacts with USP49. Forms a microtubule-associated complex with POC5, POC1B and FAM161A. Interacts with CCDC15.

The protein resides in the cytoplasm. It localises to the cytoskeleton. It is found in the microtubule organizing center. The protein localises to the centrosome. Its subcellular location is the centriole. The protein resides in the nucleus envelope. It localises to the nucleus. It is found in the nuclear pore complex. In terms of biological role, plays a fundamental role in microtubule organizing center structure and function. Required for centriole duplication and correct spindle formation. Has a role in regulating cytokinesis and genome stability via cooperation with CALM1 and CCP110. Functionally, involved in global genome nucleotide excision repair (GG-NER) by acting as component of the XPC complex. Cooperatively with RAD23B appears to stabilize XPC. In vitro, stimulates DNA binding of the XPC:RAD23B dimer. Its function is as follows. The XPC complex is proposed to represent the first factor bound at the sites of DNA damage and together with other core recognition factors, XPA, RPA and the TFIIH complex, is part of the pre-incision (or initial recognition) complex. The XPC complex recognizes a wide spectrum of damaged DNA characterized by distortions of the DNA helix such as single-stranded loops, mismatched bubbles or single-stranded overhangs. The orientation of XPC complex binding appears to be crucial for inducing a productive NER. XPC complex is proposed to recognize and to interact with unpaired bases on the undamaged DNA strand which is followed by recruitment of the TFIIH complex and subsequent scanning for lesions in the opposite strand in a 5'-to-3' direction by the NER machinery. Cyclobutane pyrimidine dimers (CPDs) which are formed upon UV-induced DNA damage esacpe detection by the XPC complex due to a low degree of structural perurbation. Instead they are detected by the UV-DDB complex which in turn recruits and cooperates with the XPC complex in the respective DNA repair. As a component of the TREX-2 complex, involved in the export of mRNAs to the cytoplasm through the nuclear pores. The protein is Centrin-2 (CETN2) of Homo sapiens (Human).